A 31-amino-acid polypeptide reads, in one-letter code: Photosystem II reaction center protein T (31 aa).

Residues 3-23 form a helical membrane-spanning segment; that stretch reads ALVYTFLLVGTLGIIFFSIFF.

Belongs to the PsbT family. As to quaternary structure, PSII is composed of 1 copy each of membrane proteins PsbA, PsbB, PsbC, PsbD, PsbE, PsbF, PsbH, PsbI, PsbJ, PsbK, PsbL, PsbM, PsbT, PsbY, PsbZ, Psb30/Ycf12, at least 3 peripheral proteins of the oxygen-evolving complex and a large number of cofactors. It forms dimeric complexes.

The protein localises to the plastid. It is found in the chloroplast thylakoid membrane. Its function is as follows. Found at the monomer-monomer interface of the photosystem II (PS II) dimer, plays a role in assembly and dimerization of PSII. PSII is a light-driven water plastoquinone oxidoreductase, using light energy to abstract electrons from H(2)O, generating a proton gradient subsequently used for ATP formation. The chain is Photosystem II reaction center protein T from Bigelowiella natans (Pedinomonas minutissima).